The following is a 237-amino-acid chain: Ribose-5-phosphate isomerase A (237 aa).

Substrate-binding positions include 33–36 (TGST), 88–91 (DGAD), and 101–104 (KGRG). The Proton acceptor role is filled by glutamate 110. Position 128 (lysine 128) interacts with substrate.

The protein belongs to the ribose 5-phosphate isomerase family. In terms of assembly, homodimer.

The enzyme catalyses aldehydo-D-ribose 5-phosphate = D-ribulose 5-phosphate. The protein operates within carbohydrate degradation; pentose phosphate pathway; D-ribose 5-phosphate from D-ribulose 5-phosphate (non-oxidative stage): step 1/1. In terms of biological role, catalyzes the reversible conversion of ribose-5-phosphate to ribulose 5-phosphate. The chain is Ribose-5-phosphate isomerase A from Methanoregula boonei (strain DSM 21154 / JCM 14090 / 6A8).